The primary structure comprises 861 residues: Putative glutamate--cysteine ligase 2-2 (861 aa).

A carboxylate-amine ligase region spans residues M1–A372. A unknown region spans residues A373 to R861.

This sequence in the N-terminal section; belongs to the glutamate--cysteine ligase type 2 family. YbdK subfamily.

It catalyses the reaction L-cysteine + L-glutamate + ATP = gamma-L-glutamyl-L-cysteine + ADP + phosphate + H(+). Its function is as follows. ATP-dependent carboxylate-amine ligase which exhibits weak glutamate--cysteine ligase activity. In Frankia casuarinae (strain DSM 45818 / CECT 9043 / HFP020203 / CcI3), this protein is Putative glutamate--cysteine ligase 2-2.